A 414-amino-acid chain; its full sequence is Serine/threonine transporter SstT (414 aa).

Over 2 to 15 (TTQRSPGLFRRLAH) the chain is Cytoplasmic. Residues 16–36 (GSLVKQILVGLVLGILLAWIS) traverse the membrane as a helical segment. Residues 37 to 45 (KPAAEAVGL) are Periplasmic-facing. A helical membrane pass occupies residues 46-66 (LGTLFVGALKAVAPILVLMLV). At 67 to 83 (MASIANHQHGQKTNIRP) the chain is on the cytoplasmic side. The chain crosses the membrane as a helical span at residues 84 to 104 (ILFLYLLGTFSAALAAVVFSF). The Periplasmic segment spans residues 105 to 142 (AFPSTLHLSSSAGDISPPSGIVEVMRGLVMSMVSNPID). A helical membrane pass occupies residues 143–163 (ALLKGNYIGILVWAIGLGFAL). The Cytoplasmic portion of the chain corresponds to 164–179 (RHGNETTKNLVNDMSN). Residues 180–200 (AVTFMVKLVIRFAPIGIFGLV) traverse the membrane as a helical segment. At 201–217 (SSTLATTGFSTLWGYAQ) the chain is on the periplasmic side. Residues 218–238 (LLVVLVGCMLLVALVVNPLLV) form a helical membrane-spanning segment. Over 239-299 (WWKIRRNPFP…VSIPLGATIN (61 aa)) the chain is Cytoplasmic. Residues 300–320 (MAGAAITITVLTLAAVNTLGI) form a helical membrane-spanning segment. At 321–331 (PVDLPTALLLS) the chain is on the periplasmic side. Residues 332–352 (VVASLCACGASGVAGGSLLLI) traverse the membrane as a helical segment. Over 353–414 (PLACNMFGIS…DRLANSALRN (62 aa)) the chain is Cytoplasmic.

It belongs to the dicarboxylate/amino acid:cation symporter (DAACS) (TC 2.A.23) family.

It is found in the cell inner membrane. The enzyme catalyses L-serine(in) + Na(+)(in) = L-serine(out) + Na(+)(out). It carries out the reaction L-threonine(in) + Na(+)(in) = L-threonine(out) + Na(+)(out). Functionally, involved in the import of serine and threonine into the cell, with the concomitant import of sodium (symport system). The protein is Serine/threonine transporter SstT of Shigella flexneri serotype 5b (strain 8401).